A 757-amino-acid chain; its full sequence is Receptor protein kinase-like protein At4g34220 (757 aa).

An N-terminal signal peptide occupies residues 1 to 26; sequence MTSNRSNLLFSLVLFHFLFVPTQLQA. LRR repeat units lie at residues 104–126, 128–150, 152–174, 176–198, 199–219, 220–242, and 245–267; these read YLRILDLSSNFFNGSLPDSVFNA, ELQSISLGSNNLSGDLPKSVNSV, NLQLLNLSANAFTGEIPLNISLL, NLTVVSLSKNTFSGDIPSGFEAA, QILDLSSNLLNGSLPKDLGGK, SLHYLNLSHNKVLGEISPNFAEK, and ANATVDLSFNNLTGPIPSSLSLL. A helical membrane pass occupies residues 339–359; it reads IAAITVADIVGLAFIGLLVLY. A Protein kinase domain is found at 471–753; sequence KASAYILGTT…KELVQVLEKI (283 aa). Serine 473 is modified (phosphoserine). Threonine 494 is subject to Phosphothreonine. Residue serine 553 is modified to Phosphoserine. The segment at 633–654 is disordered; sequence ARESHTTGPTSSSPYQPPEWST. Threonine 638 and threonine 639 each carry phosphothreonine. Polar residues predominate over residues 638–654; sequence TTGPTSSSPYQPPEWST.

Belongs to the protein kinase superfamily.

The protein localises to the membrane. The chain is Receptor protein kinase-like protein At4g34220 from Arabidopsis thaliana (Mouse-ear cress).